Reading from the N-terminus, the 348-residue chain is Ketol-acid reductoisomerase (NADP(+)) (348 aa).

Residues 2 to 182 enclose the KARI N-terminal Rossmann domain; the sequence is AKTYYDHDAD…GCTRAGVLET (181 aa). Residues 25–28, Ser-51, Ser-53, and 83–86 each bind NADP(+); these read YGSQ and DTAQ. Residue His-108 is part of the active site. Gly-134 provides a ligand contact to NADP(+). Residues 183 to 328 enclose the KARI C-terminal knotted domain; the sequence is TFKEETETDL…EKLRAAMPFL (146 aa). Residues Asp-191, Glu-195, Glu-227, and Glu-231 each coordinate Mg(2+). Position 252 (Ser-252) interacts with substrate.

Belongs to the ketol-acid reductoisomerase family. Requires Mg(2+) as cofactor.

The enzyme catalyses (2R)-2,3-dihydroxy-3-methylbutanoate + NADP(+) = (2S)-2-acetolactate + NADPH + H(+). It catalyses the reaction (2R,3R)-2,3-dihydroxy-3-methylpentanoate + NADP(+) = (S)-2-ethyl-2-hydroxy-3-oxobutanoate + NADPH + H(+). The protein operates within amino-acid biosynthesis; L-isoleucine biosynthesis; L-isoleucine from 2-oxobutanoate: step 2/4. It functions in the pathway amino-acid biosynthesis; L-valine biosynthesis; L-valine from pyruvate: step 2/4. In terms of biological role, involved in the biosynthesis of branched-chain amino acids (BCAA). Catalyzes an alkyl-migration followed by a ketol-acid reduction of (S)-2-acetolactate (S2AL) to yield (R)-2,3-dihydroxy-isovalerate. In the isomerase reaction, S2AL is rearranged via a Mg-dependent methyl migration to produce 3-hydroxy-3-methyl-2-ketobutyrate (HMKB). In the reductase reaction, this 2-ketoacid undergoes a metal-dependent reduction by NADPH to yield (R)-2,3-dihydroxy-isovalerate. This is Ketol-acid reductoisomerase (NADP(+)) from Acidobacterium capsulatum (strain ATCC 51196 / DSM 11244 / BCRC 80197 / JCM 7670 / NBRC 15755 / NCIMB 13165 / 161).